Here is a 155-residue protein sequence, read N- to C-terminus: Large ribosomal subunit protein eL24 (155 aa).

Residues 92–155 (AKRNMKPEVR…KAAPRVGGKR (64 aa)) form a disordered region. The span at 96–117 (MKPEVRKAQREQAIKQAKEQKK) shows a compositional bias: basic and acidic residues. Positions 124–133 (KTTAPPTKGK) are enriched in low complexity.

This sequence belongs to the eukaryotic ribosomal protein eL24 family.

In Plutella xylostella (Diamondback moth), this protein is Large ribosomal subunit protein eL24 (RpL24).